The chain runs to 566 residues: Glutamate--tRNA ligase (566 aa).

The 'HIGH' region signature appears at Pro-93–Asn-103.

This sequence belongs to the class-I aminoacyl-tRNA synthetase family. Glutamate--tRNA ligase type 2 subfamily.

It localises to the cytoplasm. The enzyme catalyses tRNA(Glu) + L-glutamate + ATP = L-glutamyl-tRNA(Glu) + AMP + diphosphate. In terms of biological role, catalyzes the attachment of glutamate to tRNA(Glu) in a two-step reaction: glutamate is first activated by ATP to form Glu-AMP and then transferred to the acceptor end of tRNA(Glu). The protein is Glutamate--tRNA ligase of Staphylothermus marinus (strain ATCC 43588 / DSM 3639 / JCM 9404 / F1).